We begin with the raw amino-acid sequence, 365 residues long: Tartrate dehydrogenase/decarboxylase (365 aa).

Residues aspartate 225, aspartate 250, and aspartate 254 each contribute to the Mn(2+) site.

Belongs to the isocitrate and isopropylmalate dehydrogenases family. Homodimer. Mg(2+) is required as a cofactor. Requires Mn(2+) as cofactor. K(+) serves as cofactor.

Its subcellular location is the cytoplasm. It carries out the reaction tartrate + NAD(+) = 2-hydroxy-3-oxosuccinate + NADH + H(+). The enzyme catalyses (2R,3S)-tartrate + NAD(+) = 2-hydroxy-3-oxosuccinate + NADH + H(+). It catalyses the reaction (2R,3R)-tartrate + NAD(+) = 2-hydroxy-3-oxosuccinate + NADH + H(+). The catalysed reaction is (2R,3R)-tartrate + H(+) = (R)-glycerate + CO2. It carries out the reaction (R)-malate + NAD(+) = pyruvate + CO2 + NADH. Its pathway is carbohydrate acid metabolism; tartrate degradation; 2-hydroxy-3-oxosuccinate from L-tartrate: step 1/1. The protein operates within carbohydrate acid metabolism; tartrate degradation; 2-hydroxy-3-oxosuccinate from meso-tartrate: step 1/1. It participates in carbohydrate acid metabolism; tartrate degradation; D-glycerate from L-tartrate: step 1/1. Has multiple catalytic activities. Apart from catalyzing the oxidation of (+)-tartrate to oxaloglycolate, also converts meso-tartrate to D-glycerate and catalyzes the oxidative decarboxylation of D-malate to pyruvate. The sequence is that of Tartrate dehydrogenase/decarboxylase from Pseudomonas putida (Arthrobacter siderocapsulatus).